The chain runs to 610 residues: L-galactono-1,4-lactone dehydrogenase, mitochondrial (610 aa).

Residues 1-35 (MLRSLLLRRSVGHSLGTLSPSSSTIRSSFSPHRTL) constitute a mitochondrion transit peptide. The segment at 17–61 (TLSPSSSTIRSSFSPHRTLCTTGQTLTPPPPPPPRPPPPPPATAS) is disordered. The segment covering 19-30 (SPSSSTIRSSFS) has biased composition (low complexity). Positions 36 to 101 (CTTGQTLTPP…AKHKKAQIFR (66 aa)) are cleaved as a propeptide — removed in mature form. The span at 43–58 (TPPPPPPPRPPPPPPA) shows a compositional bias: pro residues. Residues 68–84 (YAGYAALAIFSGVATYF) form a helical membrane-spanning segment. One can recognise an FAD-binding PCMH-type domain in the interval 123 to 258 (TRNFNQPENL…TPAKGTIELS (136 aa)).

FAD is required as a cofactor.

The protein resides in the mitochondrion membrane. The enzyme catalyses L-galactono-1,4-lactone + 4 Fe(III)-[cytochrome c] = L-dehydroascorbate + 4 Fe(II)-[cytochrome c] + 5 H(+). The catalysed reaction is L-gulono-1,4-lactone + 2 Fe(III)-[cytochrome c] = L-ascorbate + 2 Fe(II)-[cytochrome c] + 3 H(+). It functions in the pathway cofactor biosynthesis; L-ascorbate biosynthesis. Its function is as follows. Involved in the biosynthesis of ascorbate. Catalyzes the final step of ascorbate biosynthesis. Uses L-galactono-1,4-lactone and L-gulono-1,4-lactone as substrates, but not D-galactono-1,4-lactone, D-gulono-1,4-lactone, L-mannono-1,4-lactone or D-galactonic acid. Also active with phenazine methosulfate and 1,4-benzoquinone as electron acceptors. Involved in the regulation of the accumulation of the mitochondrial respiratory complex I. Structural part of one of the plant-specific mitochondrial complex I assembly intermediates, lacking the whole distal (PD) module. Prevents the binding of the plant specific P1 protein (CPN60/HSP60), responsible for the linkage of the proximal (PP) to the distal (PD) module. The protein is L-galactono-1,4-lactone dehydrogenase, mitochondrial of Arabidopsis thaliana (Mouse-ear cress).